The sequence spans 146 residues: ATP synthase epsilon chain (146 aa).

Belongs to the ATPase epsilon chain family. In terms of assembly, F-type ATPases have 2 components, CF(1) - the catalytic core - and CF(0) - the membrane proton channel. CF(1) has five subunits: alpha(3), beta(3), gamma(1), delta(1), epsilon(1). CF(0) has three main subunits: a, b and c.

The protein localises to the cell membrane. Functionally, produces ATP from ADP in the presence of a proton gradient across the membrane. In Lactobacillus delbrueckii subsp. bulgaricus (strain ATCC 11842 / DSM 20081 / BCRC 10696 / JCM 1002 / NBRC 13953 / NCIMB 11778 / NCTC 12712 / WDCM 00102 / Lb 14), this protein is ATP synthase epsilon chain.